The following is a 443-amino-acid chain: UDP-N-acetylmuramate--L-alanine ligase (443 aa).

110–116 is an ATP binding site; it reads GAHGKTS.

Belongs to the MurCDEF family.

It is found in the cytoplasm. The catalysed reaction is UDP-N-acetyl-alpha-D-muramate + L-alanine + ATP = UDP-N-acetyl-alpha-D-muramoyl-L-alanine + ADP + phosphate + H(+). The protein operates within cell wall biogenesis; peptidoglycan biosynthesis. In terms of biological role, cell wall formation. This Streptococcus gordonii (strain Challis / ATCC 35105 / BCRC 15272 / CH1 / DL1 / V288) protein is UDP-N-acetylmuramate--L-alanine ligase.